A 378-amino-acid polypeptide reads, in one-letter code: Putative F-box/kelch-repeat protein At3g43710 (378 aa).

Residues 23-69 (TFGIEMLPDDLVLSCLARVPRMYYPILSLVSKRFRSFLTSTELYQTR) form the F-box domain. Kelch repeat units follow at residues 130–176 (NIYV…VLDG), 178–227 (IYVA…GYDG), and 262–308 (SQCV…VPTK).

In Arabidopsis thaliana (Mouse-ear cress), this protein is Putative F-box/kelch-repeat protein At3g43710.